A 326-amino-acid polypeptide reads, in one-letter code: DnaJ homolog subfamily B member 6 (326 aa).

The 68-residue stretch at valine 2–glycine 69 folds into the J domain. The segment at valine 2–glycine 146 is interaction with HSP70. The tract at residues phenylalanine 119–arginine 242 is interaction with KRT18. Arginine 135 carries the omega-N-methylarginine modification. Positions alanine 249–histidine 326 are disordered. Phosphoserine is present on serine 277.

Homooligomer. Interacts with BAG3, HSPB8 and STUB1. Interacts with ALKBH1. Interacts with HSP70, KRT18 and PTTG.

It is found in the cytoplasm. Its subcellular location is the perinuclear region. The protein localises to the nucleus. It localises to the myofibril. The protein resides in the sarcomere. It is found in the z line. Has a stimulatory effect on the ATPase activity of HSP70 in a dose-dependent and time-dependent manner and hence acts as a co-chaperone of HSP70. Plays an indispensable role in the organization of KRT8/KRT18 filaments. Acts as an endogenous molecular chaperone for neuronal proteins including huntingtin. Suppresses aggregation and toxicity of polyglutamine-containing, aggregation-prone proteins. Also reduces cellular toxicity and caspase-3 activity. This chain is DnaJ homolog subfamily B member 6 (DNAJB6), found in Pongo abelii (Sumatran orangutan).